Reading from the N-terminus, the 339-residue chain is Protein-glutamate methylesterase/protein-glutamine glutaminase 2 (339 aa).

Residues 2–119 (NIGIVNDLPL…GLSTDASPQA (118 aa)) form the Response regulatory domain. Asp-53 carries the 4-aspartylphosphate modification. In terms of domain architecture, CheB-type methylesterase spans 141–336 (PGPAPERGQP…PQLISRITRP (196 aa)). Catalysis depends on residues Ser-158, His-185, and Asp-278.

This sequence belongs to the CheB family. In terms of processing, phosphorylated by CheA. Phosphorylation of the N-terminal regulatory domain activates the methylesterase activity.

Its subcellular location is the cytoplasm. It carries out the reaction [protein]-L-glutamate 5-O-methyl ester + H2O = L-glutamyl-[protein] + methanol + H(+). The catalysed reaction is L-glutaminyl-[protein] + H2O = L-glutamyl-[protein] + NH4(+). Functionally, involved in chemotaxis. Part of a chemotaxis signal transduction system that modulates chemotaxis in response to various stimuli. Catalyzes the demethylation of specific methylglutamate residues introduced into the chemoreceptors (methyl-accepting chemotaxis proteins or MCP) by CheR. Also mediates the irreversible deamidation of specific glutamine residues to glutamic acid. The polypeptide is Protein-glutamate methylesterase/protein-glutamine glutaminase 2 (Burkholderia lata (strain ATCC 17760 / DSM 23089 / LMG 22485 / NCIMB 9086 / R18194 / 383)).